We begin with the raw amino-acid sequence, 296 residues long: tRNA pseudouridine synthase B (296 aa).

Asp38 serves as the catalytic Nucleophile.

This sequence belongs to the pseudouridine synthase TruB family. Type 1 subfamily.

It catalyses the reaction uridine(55) in tRNA = pseudouridine(55) in tRNA. Its function is as follows. Responsible for synthesis of pseudouridine from uracil-55 in the psi GC loop of transfer RNAs. This chain is tRNA pseudouridine synthase B, found in Ehrlichia chaffeensis (strain ATCC CRL-10679 / Arkansas).